A 316-amino-acid chain; its full sequence is HPr kinase/phosphorylase (316 aa).

Active-site residues include histidine 143 and lysine 164. 158 to 165 is a binding site for ATP; it reads GEAGSGKS. Serine 165 lines the Mg(2+) pocket. The active-site Proton acceptor; for phosphorylation activity. Proton donor; for dephosphorylation activity is the aspartate 182. The interval 206–215 is important for the catalytic mechanism of both phosphorylation and dephosphorylation; that stretch reads LEVRGLGVLN. Glutamate 207 provides a ligand contact to Mg(2+). The active site involves arginine 251. Residues 272–277 form an important for the catalytic mechanism of dephosphorylation region; that stretch reads PVMPGR.

Belongs to the HPrK/P family. As to quaternary structure, homohexamer. Mg(2+) is required as a cofactor.

It carries out the reaction [HPr protein]-L-serine + ATP = [HPr protein]-O-phospho-L-serine + ADP + H(+). The enzyme catalyses [HPr protein]-O-phospho-L-serine + phosphate + H(+) = [HPr protein]-L-serine + diphosphate. Functionally, catalyzes the ATP- as well as the pyrophosphate-dependent phosphorylation of a specific serine residue in HPr, a phosphocarrier protein of the phosphoenolpyruvate-dependent sugar phosphotransferase system (PTS). HprK/P also catalyzes the pyrophosphate-producing, inorganic phosphate-dependent dephosphorylation (phosphorolysis) of seryl-phosphorylated HPr (P-Ser-HPr). This Xanthomonas campestris pv. campestris (strain 8004) protein is HPr kinase/phosphorylase.